We begin with the raw amino-acid sequence, 262 residues long: Lectin (262 aa).

The N-terminal stretch at 1–21 is a signal peptide; the sequence is MASSVLLVLSLFLVLLLTQAS. N-linked (GlcNAc...) asparagine glycans are attached at residues N53, N82, N100, N129, and N205.

It belongs to the leguminous lectin family.

This metalloglycoprotein, containing Ca(2+), Mn(2+), binds glycoconjugates containing terminal non-reducing alpha-D-GalNAc residues. This chain is Lectin, found in Phaseolus lunatus (Lima bean).